We begin with the raw amino-acid sequence, 624 residues long: Adenine deaminase 1 (624 aa).

It belongs to the metallo-dependent hydrolases superfamily. Adenine deaminase family. The cofactor is Mn(2+).

It carries out the reaction adenine + H2O + H(+) = hypoxanthine + NH4(+). The protein is Adenine deaminase 1 of Bradyrhizobium sp. (strain ORS 278).